A 213-amino-acid polypeptide reads, in one-letter code: Adenylate kinase (213 aa).

10–15 (GAGKGT) is an ATP binding site. The segment at 30-59 (STGDMLRAALKEGTPLGLEAKKYMDQGALV) is NMP. Residues Thr31, Arg36, 57–59 (ALV), 85–88 (GFPR), and Gln92 each bind AMP. Residues 126–163 (GRRTCRSCGAGFHVMFDPPKTDGKCDKCGGELYQRDDD) are LID. ATP is bound at residue Arg127. Residues Cys130, Cys133, Cys150, and Cys153 each coordinate Zn(2+). Residues Arg160 and Arg171 each coordinate AMP. Gly199 contributes to the ATP binding site.

The protein belongs to the adenylate kinase family. In terms of assembly, monomer.

It is found in the cytoplasm. It catalyses the reaction AMP + ATP = 2 ADP. It participates in purine metabolism; AMP biosynthesis via salvage pathway; AMP from ADP: step 1/1. Its function is as follows. Catalyzes the reversible transfer of the terminal phosphate group between ATP and AMP. Plays an important role in cellular energy homeostasis and in adenine nucleotide metabolism. This is Adenylate kinase from Syntrophobacter fumaroxidans (strain DSM 10017 / MPOB).